The primary structure comprises 391 residues: Na(+)/H(+) antiporter NhaA (391 aa).

11 consecutive transmembrane segments (helical) span residues 14–34 (AGGILLMVSVVLAMILANSPL), 59–79 (LIHWINDGLMAIFFMLIGLEV), 95–115 (SLPTFAAIGGMVFPAAVYLIF), 124–144 (VGWAIPAATDIAFALGIMALL), 154–174 (VFLLALAIIDDLGVVVIIALF), 177–197 (TDLSTISLIIAAAAILGLIGL), 213–233 (LILWIAVLKSGVHATLAGVII), 261–281 (FIILPIFAFANAGVDLSGMSL), 292–312 (IALGLLVGKPLGIMLFSYIAV), 331–351 (VAVMCGIGFTMSMFISSLAFV), and 363–383 (LGILLGSIASATIGYFWLSKV).

It belongs to the NhaA Na(+)/H(+) (TC 2.A.33) antiporter family.

It localises to the cell inner membrane. It carries out the reaction Na(+)(in) + 2 H(+)(out) = Na(+)(out) + 2 H(+)(in). Na(+)/H(+) antiporter that extrudes sodium in exchange for external protons. This is Na(+)/H(+) antiporter NhaA from Shewanella pealeana (strain ATCC 700345 / ANG-SQ1).